A 284-amino-acid polypeptide reads, in one-letter code: tRNA-cytidine(32) 2-sulfurtransferase (284 aa).

Residues 45 to 50 (SGGKDS) carry the PP-loop motif motif. [4Fe-4S] cluster contacts are provided by C120, C123, and C211.

Belongs to the TtcA family. In terms of assembly, homodimer. It depends on Mg(2+) as a cofactor. The cofactor is [4Fe-4S] cluster.

Its subcellular location is the cytoplasm. It catalyses the reaction cytidine(32) in tRNA + S-sulfanyl-L-cysteinyl-[cysteine desulfurase] + AH2 + ATP = 2-thiocytidine(32) in tRNA + L-cysteinyl-[cysteine desulfurase] + A + AMP + diphosphate + H(+). It functions in the pathway tRNA modification. Catalyzes the ATP-dependent 2-thiolation of cytidine in position 32 of tRNA, to form 2-thiocytidine (s(2)C32). The sulfur atoms are provided by the cysteine/cysteine desulfurase (IscS) system. The chain is tRNA-cytidine(32) 2-sulfurtransferase from Alcanivorax borkumensis (strain ATCC 700651 / DSM 11573 / NCIMB 13689 / SK2).